The sequence spans 186 residues: Adenylate kinase isoenzyme 6 homolog (186 aa).

ATP is bound by residues Gly15, Gly17, Lys18, Ser19, and Thr20. The interval 48–71 (NLSNIIKDERLYKEFDDELDASIY) is NMPbind. Positions 126–136 (KRNYTKEKIKN) are LID. Arg127 contacts ATP.

This sequence belongs to the adenylate kinase family. AK6 subfamily. Monomer and homodimer. Interacts with small ribosomal subunit protein uS11. Not a structural component of 43S pre-ribosomes, but transiently interacts with them by binding to uS11.

It localises to the cytoplasm. Its subcellular location is the nucleus. It carries out the reaction AMP + ATP = 2 ADP. It catalyses the reaction ATP + H2O = ADP + phosphate + H(+). Its function is as follows. Broad-specificity nucleoside monophosphate (NMP) kinase that catalyzes the reversible transfer of the terminal phosphate group between nucleoside triphosphates and monophosphates. Also has ATPase activity. Involved in the late cytoplasmic maturation steps of the 40S ribosomal particles, specifically 18S rRNA maturation. While NMP activity is not required for ribosome maturation, ATPase activity is. Associates transiently with small ribosomal subunit protein uS11. ATP hydrolysis breaks the interaction with uS11. May temporarily remove uS11 from the ribosome to enable a conformational change of the ribosomal RNA that is needed for the final maturation step of the small ribosomal subunit. Its NMP activity may have a role in nuclear energy homeostasis. This is Adenylate kinase isoenzyme 6 homolog from Plasmodium falciparum (isolate 3D7).